A 465-amino-acid chain; its full sequence is Phosphomannomutase/phosphoglucomutase (465 aa).

Ser-110 functions as the Phosphoserine intermediate in the catalytic mechanism. The Mg(2+) site is built by Ser-110, Asp-244, Asp-246, and Asp-248. Glu-327, Ser-329, and His-331 together coordinate substrate.

The protein belongs to the phosphohexose mutase family. In terms of assembly, monomer. Requires Mg(2+) as cofactor.

It catalyses the reaction alpha-D-mannose 1-phosphate = D-mannose 6-phosphate. It carries out the reaction alpha-D-glucose 1-phosphate = alpha-D-glucose 6-phosphate. The protein operates within nucleotide-sugar biosynthesis; GDP-alpha-D-mannose biosynthesis; alpha-D-mannose 1-phosphate from D-fructose 6-phosphate: step 2/2. It functions in the pathway bacterial outer membrane biogenesis; lipopolysaccharide biosynthesis. Its function is as follows. The phosphomannomutase activity produces a precursor for alginate polymerization. The alginate layer causes a mucoid phenotype and provides a protective barrier against host immune defenses and antibiotics. Also involved in core-LPS biosynthesis due to its phosphoglucomutase activity. Essential for biofilm production. The chain is Phosphomannomutase/phosphoglucomutase (algC) from Pseudomonas syringae pv. tomato (strain ATCC BAA-871 / DC3000).